The primary structure comprises 939 residues: Collagen-like protein 3 (939 aa).

Asparagine 15, asparagine 35, asparagine 39, and asparagine 82 each carry an N-linked (GlcNAc...) asparagine; by host glycan. Positions serine 84–proline 95 are enriched in low complexity. Disordered regions lie at residues serine 84 to asparagine 332 and serine 358 to alanine 697. Collagen-like domains follow at residues glycine 88 to lysine 147, glycine 148 to lysine 207, glycine 211 to leucine 330, glycine 364 to aspartate 423, glycine 427 to lysine 486, glycine 493 to lysine 552, glycine 564 to valine 622, and glycine 638 to alanine 697. Composition is skewed to basic and acidic residues over residues lysine 96–glutamate 110, aspartate 123–isoleucine 182, aspartate 189–leucine 230, aspartate 237–proline 260, aspartate 267–lysine 288, lysine 297–glutamate 314, lysine 360–leucine 371, aspartate 378–leucine 416, aspartate 423–isoleucine 491, aspartate 498–isoleucine 527, lysine 537–lysine 552, lysine 560–isoleucine 580, and lysine 589–aspartate 684. Asparagine 788, asparagine 820, asparagine 858, asparagine 919, and asparagine 925 each carry an N-linked (GlcNAc...) asparagine; by host glycan. Residues asparagine 896–glycine 923 form a disordered region. Gly residues predominate over residues tyrosine 910–glycine 923.

In terms of processing, may be hydroxylated on lysine by the viral-encoded procollagen-lysine,2-oxoglutarate 5-dioxygenase.

It localises to the virion. In terms of biological role, may participate in the formation of a layer of cross-linked glycosylated fibrils at the viral surface thus giving it a hairy-like appearance. The chain is Collagen-like protein 3 from Acanthamoeba polyphaga (Amoeba).